The sequence spans 69 residues: Cytochrome c oxidase subunit 8A, mitochondrial (69 aa).

The transit peptide at 1–25 directs the protein to the mitochondrion; that stretch reads MYVVTPLLLRGLTGSARRLPVPRAQ. An SIFI-degron motif is present at residues 2–19; that stretch reads YVVTPLLLRGLTGSARRL. Residues 26–36 lie on the Mitochondrial matrix side of the membrane; the sequence is VHSMPPEQKLG. The chain crosses the membrane as a helical span at residues 37-60; sequence VLELAIGFTSCMVTFLLPAGWIMS. Residues 61 to 69 are Mitochondrial intermembrane-facing; that stretch reads HLESYKKRG.

The protein belongs to the cytochrome c oxidase VIII family. Component of the cytochrome c oxidase (complex IV, CIV), a multisubunit enzyme composed of 14 subunits. The complex is composed of a catalytic core of 3 subunits MT-CO1, MT-CO2 and MT-CO3, encoded in the mitochondrial DNA, and 11 supernumerary subunits COX4I, COX5A, COX5B, COX6A, COX6B, COX6C, COX7A, COX7B, COX7C, COX8 and NDUFA4, which are encoded in the nuclear genome. The complex exists as a monomer or a dimer and forms supercomplexes (SCs) in the inner mitochondrial membrane with NADH-ubiquinone oxidoreductase (complex I, CI) and ubiquinol-cytochrome c oxidoreductase (cytochrome b-c1 complex, complex III, CIII), resulting in different assemblies (supercomplex SCI(1)III(2)IV(1) and megacomplex MCI(2)III(2)IV(2)). In response to mitochondrial stress, the precursor protein is ubiquitinated by the SIFI complex in the cytoplasm before mitochondrial import, leading to its degradation. Within the SIFI complex, UBR4 initiates ubiquitin chain that are further elongated or branched by KCMF1.

Its subcellular location is the mitochondrion inner membrane. The protein operates within energy metabolism; oxidative phosphorylation. In terms of biological role, component of the cytochrome c oxidase, the last enzyme in the mitochondrial electron transport chain which drives oxidative phosphorylation. The respiratory chain contains 3 multisubunit complexes succinate dehydrogenase (complex II, CII), ubiquinol-cytochrome c oxidoreductase (cytochrome b-c1 complex, complex III, CIII) and cytochrome c oxidase (complex IV, CIV), that cooperate to transfer electrons derived from NADH and succinate to molecular oxygen, creating an electrochemical gradient over the inner membrane that drives transmembrane transport and the ATP synthase. Cytochrome c oxidase is the component of the respiratory chain that catalyzes the reduction of oxygen to water. Electrons originating from reduced cytochrome c in the intermembrane space (IMS) are transferred via the dinuclear copper A center (CU(A)) of subunit 2 and heme A of subunit 1 to the active site in subunit 1, a binuclear center (BNC) formed by heme A3 and copper B (CU(B)). The BNC reduces molecular oxygen to 2 water molecules using 4 electrons from cytochrome c in the IMS and 4 protons from the mitochondrial matrix. The sequence is that of Cytochrome c oxidase subunit 8A, mitochondrial (COX8A) from Ateles belzebuth (White-bellied spider monkey).